The sequence spans 192 residues: Thymidine kinase (192 aa).

ATP-binding positions include 9-16 and 88-91; these read SAMNAGKT and DECH. Catalysis depends on glutamate 89, which acts as the Proton acceptor. Zn(2+)-binding residues include cysteine 146, cysteine 148, cysteine 183, and histidine 186.

Belongs to the thymidine kinase family. In terms of assembly, homotetramer.

The protein resides in the cytoplasm. The catalysed reaction is thymidine + ATP = dTMP + ADP + H(+). The chain is Thymidine kinase from Blochmanniella floridana.